We begin with the raw amino-acid sequence, 105 residues long: MKQQKQRIRIRLKGFDQGQLDQSTANIVETAKRTGARVVGPIPLPTKREVYTVLRSPHVDKKSREQFEIRTHKRLIDILDPTGKTIDALKMLSLPAGVDIKIKAA.

The protein belongs to the universal ribosomal protein uS10 family. Part of the 30S ribosomal subunit.

Functionally, involved in the binding of tRNA to the ribosomes. The sequence is that of Small ribosomal subunit protein uS10 from Chlamydia muridarum (strain MoPn / Nigg).